We begin with the raw amino-acid sequence, 224 residues long: Cysteine S-methyltransferase NleE (224 aa).

The interaction with host proteins TAB2, TAB3 and ZRANB3 stretch occupies residues 49–52 (GITR). Residues A92, S98, R107, Q111, Y204, and E208 each coordinate S-adenosyl-L-methionine.

This sequence belongs to the NleE/OspZ family. Monomer.

The protein localises to the secreted. It is found in the host nucleus. The catalysed reaction is L-cysteinyl-[protein] + S-adenosyl-L-methionine = S-methyl-L-cysteinyl-[protein] + S-adenosyl-L-homocysteine + H(+). Cysteine methyltransferase effector that inhibits host cell NF-kappa-B activation by preventing nuclear translocation of host protein RELA/p65. Acts by mediating cysteine methylation of host proteins TAB2 and TAB3: methylation of a conserved cysteine residue of the RanBP2-type zinc finger (NZF) of TAB2 and TAB3 disrupts zinc-binding, thereby inactivating the ubiquitin chain-binding activity of TAB2 and TAB3, leading to NF-kappa-B inactivation. Also mediates cysteine methylation of host protein ZRANB3, inactivating its ability to bind ubiquitin chains. In Escherichia coli O157:H7, this protein is Cysteine S-methyltransferase NleE.